Reading from the N-terminus, the 615-residue chain is UvrABC system protein C (615 aa).

A GIY-YIG domain is found at 14–91 (TSPGCYIHKD…IKENKPKYNI (78 aa)). The UVR domain maps to 196 to 231 (NKIIDELKGKMAAAAQTMEFERAAEYRDLIQAIGTL).

The protein belongs to the UvrC family. Interacts with UvrB in an incision complex.

The protein resides in the cytoplasm. The UvrABC repair system catalyzes the recognition and processing of DNA lesions. UvrC both incises the 5' and 3' sides of the lesion. The N-terminal half is responsible for the 3' incision and the C-terminal half is responsible for the 5' incision. The chain is UvrABC system protein C from Streptococcus pneumoniae serotype 19F (strain G54).